We begin with the raw amino-acid sequence, 295 residues long: Undecaprenyl-diphosphatase (295 aa).

7 helical membrane passes run 12–34 (IAIAILQGATELFPVSSLGHAVV), 50–70 (FLPFLVFLHLGTAAALLLYFW), 95–115 (IFMLLVVATLPAIVVGGLLEH), 120–140 (LFESAPIAAFFLVVNGGLLLF), 209–229 (AHFSFLIALPIILGATVLEVP), 243–263 (TAALAAVAAGITAWLSTAFLM), and 272–292 (WALKPFAFYCIIAGLGALAWL).

This sequence belongs to the UppP family.

The protein localises to the cell inner membrane. It carries out the reaction di-trans,octa-cis-undecaprenyl diphosphate + H2O = di-trans,octa-cis-undecaprenyl phosphate + phosphate + H(+). In terms of biological role, catalyzes the dephosphorylation of undecaprenyl diphosphate (UPP). Confers resistance to bacitracin. The protein is Undecaprenyl-diphosphatase of Granulibacter bethesdensis (strain ATCC BAA-1260 / CGDNIH1).